The chain runs to 124 residues: MRYGEMEVKNFNPEEIEVWPNRNDRHYTIKITLPEFSCLCPRSGYPDYATVYIEYVPSSLVVELKAIKLYINSFRDRHVSHEDSANEIYDLLYKKLSPKELYLKMDFNPRGNVHTIIEIDSKKN.

Cys-40 (thioimide intermediate) is an active-site residue. Asp-47 serves as the catalytic Proton donor. Residues 62–64 and 81–82 contribute to the substrate site; these read VEL and HE.

The protein belongs to the GTP cyclohydrolase I family. QueF type 1 subfamily.

It is found in the cytoplasm. The catalysed reaction is 7-aminomethyl-7-carbaguanine + 2 NADP(+) = 7-cyano-7-deazaguanine + 2 NADPH + 3 H(+). It functions in the pathway tRNA modification; tRNA-queuosine biosynthesis. In terms of biological role, catalyzes the NADPH-dependent reduction of 7-cyano-7-deazaguanine (preQ0) to 7-aminomethyl-7-deazaguanine (preQ1). In Wolinella succinogenes (strain ATCC 29543 / DSM 1740 / CCUG 13145 / JCM 31913 / LMG 7466 / NCTC 11488 / FDC 602W) (Vibrio succinogenes), this protein is NADPH-dependent 7-cyano-7-deazaguanine reductase.